We begin with the raw amino-acid sequence, 378 residues long: Putative methyltransferase spot-1 (378 aa).

This sequence belongs to the class IV-like SAM-binding methyltransferase superfamily.

It is found in the cytoplasm. The protein resides in the cytoskeleton. The protein localises to the spindle. It localises to the chromosome. Its subcellular location is the centromere. It is found in the kinetochore. The protein resides in the microtubule organizing center. The protein localises to the centrosome. Its function is as follows. Required for association of the centrosomes with the poles of the bipolar mitotic spindle during metaphase. The sequence is that of Putative methyltransferase spot-1 from Caenorhabditis elegans.